Here is a 169-residue protein sequence, read N- to C-terminus: GTP-dependent dephospho-CoA kinase (169 aa).

GTP-binding residues include Asp45, Asp64, and Glu121.

This sequence belongs to the GTP-dependent DPCK family.

The enzyme catalyses 3'-dephospho-CoA + GTP = GDP + CoA + H(+). It participates in cofactor biosynthesis; coenzyme A biosynthesis. Catalyzes the GTP-dependent phosphorylation of the 3'-hydroxyl group of dephosphocoenzyme A to form coenzyme A (CoA). This Methanobrevibacter smithii (strain ATCC 35061 / DSM 861 / OCM 144 / PS) protein is GTP-dependent dephospho-CoA kinase.